The following is an 80-amino-acid chain: Acyl carrier protein (80 aa).

Residues 4–79 enclose the Carrier domain; that stretch reads EEILQKVCSI…DAVKFIEEKK (76 aa). S39 is subject to O-(pantetheine 4'-phosphoryl)serine.

The protein belongs to the acyl carrier protein (ACP) family. Post-translationally, 4'-phosphopantetheine is transferred from CoA to a specific serine of apo-ACP by AcpS. This modification is essential for activity because fatty acids are bound in thioester linkage to the sulfhydryl of the prosthetic group.

The protein localises to the cytoplasm. Its pathway is lipid metabolism; fatty acid biosynthesis. In terms of biological role, carrier of the growing fatty acid chain in fatty acid biosynthesis. The chain is Acyl carrier protein from Prochlorococcus marinus subsp. pastoris (strain CCMP1986 / NIES-2087 / MED4).